The primary structure comprises 336 residues: Aspartate--ammonia ligase (336 aa).

Belongs to the class-II aminoacyl-tRNA synthetase family. AsnA subfamily.

It localises to the cytoplasm. The catalysed reaction is L-aspartate + NH4(+) + ATP = L-asparagine + AMP + diphosphate + H(+). It participates in amino-acid biosynthesis; L-asparagine biosynthesis; L-asparagine from L-aspartate (ammonia route): step 1/1. In Clostridium perfringens (strain 13 / Type A), this protein is Aspartate--ammonia ligase.